The primary structure comprises 919 residues: Isoleucine--tRNA ligase (919 aa).

The 'HIGH' region signature appears at 57–67 (PYANGHTHIGH). Residue E569 participates in L-isoleucyl-5'-AMP binding. Positions 610-614 (KMSKS) match the 'KMSKS' region motif. Position 613 (K613) interacts with ATP. Zn(2+) is bound by residues C895, C898, C910, and C913.

Belongs to the class-I aminoacyl-tRNA synthetase family. IleS type 1 subfamily. In terms of assembly, monomer. Zn(2+) serves as cofactor.

Its subcellular location is the cytoplasm. The enzyme catalyses tRNA(Ile) + L-isoleucine + ATP = L-isoleucyl-tRNA(Ile) + AMP + diphosphate. Functionally, catalyzes the attachment of isoleucine to tRNA(Ile). As IleRS can inadvertently accommodate and process structurally similar amino acids such as valine, to avoid such errors it has two additional distinct tRNA(Ile)-dependent editing activities. One activity is designated as 'pretransfer' editing and involves the hydrolysis of activated Val-AMP. The other activity is designated 'posttransfer' editing and involves deacylation of mischarged Val-tRNA(Ile). This Sulfurimonas denitrificans (strain ATCC 33889 / DSM 1251) (Thiomicrospira denitrificans (strain ATCC 33889 / DSM 1251)) protein is Isoleucine--tRNA ligase.